The sequence spans 892 residues: von Willebrand factor A domain-containing protein 7 (892 aa).

Residues 1 to 27 (MLPVEVPLSQLGPPVLLLQLLLPPTSA) form the signal peptide. Asparagine 54 carries an N-linked (GlcNAc...) asparagine glycan. A disordered region spans residues 231–272 (YFGTNPPKPPGKCSHGGRFDQSSSQPPRGGINKDSTSPSFSP). One can recognise a VWFA domain in the interval 313-495 (ASSLSFVLDT…HIRDVAAVVG (183 aa)).

It localises to the secreted. This is von Willebrand factor A domain-containing protein 7 (Vwa7) from Rattus norvegicus (Rat).